The chain runs to 510 residues: NAD(P)H-quinone oxidoreductase subunit 2 B, chloroplastic (510 aa).

13 helical membrane-spanning segments follow: residues 24–44, 57–77, 99–119, 124–144, 150–170, 183–203, 229–249, 295–315, 323–343, 354–374, 395–415, 418–438, and 484–504; these read LLLF…GLIL, IPWL…ALLF, IFQF…VEYI, MAIT…MFLC, ITIF…SGYT, YLLM…WLYG, ISIA…PAPF, WHLL…LIAI, MLAY…IVGD, YMLF…LFGL, ALSS…AGFF, LHLF…IGLL, and MIVC…IIAI.

The protein belongs to the complex I subunit 2 family. In terms of assembly, NDH is composed of at least 16 different subunits, 5 of which are encoded in the nucleus.

It is found in the plastid. The protein resides in the chloroplast thylakoid membrane. The enzyme catalyses a plastoquinone + NADH + (n+1) H(+)(in) = a plastoquinol + NAD(+) + n H(+)(out). The catalysed reaction is a plastoquinone + NADPH + (n+1) H(+)(in) = a plastoquinol + NADP(+) + n H(+)(out). NDH shuttles electrons from NAD(P)H:plastoquinone, via FMN and iron-sulfur (Fe-S) centers, to quinones in the photosynthetic chain and possibly in a chloroplast respiratory chain. The immediate electron acceptor for the enzyme in this species is believed to be plastoquinone. Couples the redox reaction to proton translocation, and thus conserves the redox energy in a proton gradient. This Drimys granadensis protein is NAD(P)H-quinone oxidoreductase subunit 2 B, chloroplastic.